The sequence spans 250 residues: Probable transcriptional regulatory protein RC1_1808 (250 aa).

The tract at residues 1–21 (MAGHSQFKNIMHRKGAQDAKR) is disordered.

Belongs to the TACO1 family.

It localises to the cytoplasm. The polypeptide is Probable transcriptional regulatory protein RC1_1808 (Rhodospirillum centenum (strain ATCC 51521 / SW)).